The primary structure comprises 521 residues: Colicin-E1* (521 aa).

Disordered stretches follow at residues 26-52 (NGNP…AAIH) and 127-163 (SGCA…EKEQ). Residues 30–42 (DGSGSGGGGGTGG) show a composition bias toward gly residues. Residues 133–145 (KQKKKPVKKRKRA) show a composition bias toward basic residues. Basic and acidic residues predominate over residues 146-163 (EKSFQEAEQRRKEIEKEQ). Transmembrane regions (helical) follow at residues 470–486 (AVDA…FSVL) and 493–509 (IWGI…FIDK).

It belongs to the channel forming colicin family.

Its subcellular location is the cell membrane. Functionally, this colicin is a channel-forming colicin. This class of transmembrane toxins depolarize the cytoplasmic membrane, leading to dissipation of cellular energy. Colicins are polypeptide toxins produced by and active against E.coli and closely related bacteria. The protein is Colicin-E1* (cea) of Shigella sonnei.